Here is a 233-residue protein sequence, read N- to C-terminus: Ribonuclease HII (233 aa).

One can recognise an RNase H type-2 domain in the interval 26-215 (QLVAGIDEVG…VRASEGEGLE (190 aa)). A divalent metal cation-binding residues include Asp32, Glu33, and Asp124. The segment at 211–233 (GEGLETAAGRQSSEGKKGRRPRG) is disordered.

It belongs to the RNase HII family. The cofactor is Mn(2+). It depends on Mg(2+) as a cofactor.

It is found in the cytoplasm. The enzyme catalyses Endonucleolytic cleavage to 5'-phosphomonoester.. Functionally, endonuclease that specifically degrades the RNA of RNA-DNA hybrids. This Syntrophobacter fumaroxidans (strain DSM 10017 / MPOB) protein is Ribonuclease HII.